The following is a 614-amino-acid chain: DNA mismatch repair protein MutL (614 aa).

The protein belongs to the DNA mismatch repair MutL/HexB family.

Its function is as follows. This protein is involved in the repair of mismatches in DNA. It is required for dam-dependent methyl-directed DNA mismatch repair. May act as a 'molecular matchmaker', a protein that promotes the formation of a stable complex between two or more DNA-binding proteins in an ATP-dependent manner without itself being part of a final effector complex. The chain is DNA mismatch repair protein MutL from Leptospira biflexa serovar Patoc (strain Patoc 1 / ATCC 23582 / Paris).